A 97-amino-acid chain; its full sequence is Theromacin (97 aa).

An N-terminal signal peptide occupies residues 1 to 22 (MELKSGLSILLCFGICIAVINA). Disulfide bonds link Cys24/Cys31, Cys46/Cys50, Cys53/Cys95, Cys61/Cys69, and Cys79/Cys81.

As to expression, coelomic liquid (at protein level). Expressed in large fat cells in contact with coelomic cavities, in intestinal epithelia and at the epidermis level.

The protein localises to the secreted. In terms of biological role, has a bactericidal activity. Active against M.luteus. No activity toward E.coli and F.oxysporum. This chain is Theromacin, found in Theromyzon tessulatum (Duck leech).